Here is a 169-residue protein sequence, read N- to C-terminus: Cytochrome c oxidase subunit 4 isoform 1, mitochondrial (169 aa).

A mitochondrion-targeting transit peptide spans 1-22; it reads MLATRVFSLVGKRAISTSVCVR. Residues 23-98 are Mitochondrial matrix-facing; sequence AHESVVKSED…SFAEMNRGSN (76 aa). Lys-29 carries the N6-acetyllysine; alternate modification. At Lys-29 the chain carries N6-succinyllysine; alternate. An N6-acetyllysine modification is found at Lys-53. Ser-56 and Ser-58 each carry phosphoserine. At Lys-60 the chain carries N6-acetyllysine; alternate. Lys-60 is subject to N6-succinyllysine; alternate. Lys-67 is subject to N6-acetyllysine. A helical membrane pass occupies residues 99-124; the sequence is EWKTVVGGAMFFIGFTALVIMWQKHY. Residues 125 to 169 lie on the Mitochondrial intermembrane side of the membrane; that stretch reads VYGPLPQSFDKEWVAKQTKRMLDMKVNPIQGLASKWDYEKNEWKK.

The protein belongs to the cytochrome c oxidase IV family. As to quaternary structure, component of the cytochrome c oxidase (complex IV, CIV), a multisubunit enzyme composed of 14 subunits. The complex is composed of a catalytic core of 3 subunits MT-CO1, MT-CO2 and MT-CO3, encoded in the mitochondrial DNA, and 11 supernumerary subunits COX4I1 (or COX4I2), COX5A, COX5B, COX6A1 (or COX6A2), COX6B1 (or COX6B2), COX6C, COX7A2 (or COX7A1), COX7B, COX7C, COX8A and NDUFA4, which are encoded in the nuclear genome. The complex exists as a monomer or a dimer and forms supercomplexes (SCs) in the inner mitochondrial membrane with NADH-ubiquinone oxidoreductase (complex I, CI) and ubiquinol-cytochrome c oxidoreductase (cytochrome b-c1 complex, complex III, CIII), resulting in different assemblies (supercomplex SCI(1)III(2)IV(1) and megacomplex MCI(2)III(2)IV(2)). Interacts with AFG1L. Interacts with PHB2; the interaction decreases in absence of SPHK2. Interacts with ABCB7; this interaction allows the regulation of cellular iron homeostasis and cellular reactive oxygen species (ROS) levels in cardiomyocytes. Interacts with FLVCR2; this interaction occurs in the absence of heme and is disrupted upon heme binding. Interacts with IRGC. In terms of tissue distribution, ubiquitous.

It localises to the mitochondrion inner membrane. It participates in energy metabolism; oxidative phosphorylation. Its function is as follows. Component of the cytochrome c oxidase, the last enzyme in the mitochondrial electron transport chain which drives oxidative phosphorylation. The respiratory chain contains 3 multisubunit complexes succinate dehydrogenase (complex II, CII), ubiquinol-cytochrome c oxidoreductase (cytochrome b-c1 complex, complex III, CIII) and cytochrome c oxidase (complex IV, CIV), that cooperate to transfer electrons derived from NADH and succinate to molecular oxygen, creating an electrochemical gradient over the inner membrane that drives transmembrane transport and the ATP synthase. Cytochrome c oxidase is the component of the respiratory chain that catalyzes the reduction of oxygen to water. Electrons originating from reduced cytochrome c in the intermembrane space (IMS) are transferred via the dinuclear copper A center (CU(A)) of subunit 2 and heme A of subunit 1 to the active site in subunit 1, a binuclear center (BNC) formed by heme A3 and copper B (CU(B)). The BNC reduces molecular oxygen to 2 water molecules using 4 electrons from cytochrome c in the IMS and 4 protons from the mitochondrial matrix. This Homo sapiens (Human) protein is Cytochrome c oxidase subunit 4 isoform 1, mitochondrial.